The sequence spans 222 residues: S-crystallin SL20-1 (222 aa).

Residues Pro2–Gly80 enclose the GST N-terminal domain. Residues Asn82–Trp222 form the GST C-terminal domain.

It belongs to the GST superfamily. Lens.

Functionally, S-crystallins are structural components of squids and octopi eye lens. Contains relatively little if any GST activity. The chain is S-crystallin SL20-1 from Nototodarus sloanii (Wellington flying squid).